A 156-amino-acid chain; its full sequence is Small ribosomal subunit protein uS7 (156 aa).

The protein belongs to the universal ribosomal protein uS7 family. Part of the 30S ribosomal subunit. Contacts proteins S9 and S11.

Its function is as follows. One of the primary rRNA binding proteins, it binds directly to 16S rRNA where it nucleates assembly of the head domain of the 30S subunit. Is located at the subunit interface close to the decoding center, probably blocks exit of the E-site tRNA. The sequence is that of Small ribosomal subunit protein uS7 from Wigglesworthia glossinidia brevipalpis.